Reading from the N-terminus, the 214-residue chain is tRNA (guanine-N(7)-)-methyltransferase (214 aa).

4 residues coordinate S-adenosyl-L-methionine: Glu-44, Glu-69, Asp-96, and Asp-118. Asp-118 is a catalytic residue. Residues Lys-122, Asp-154, and 191-194 contribute to the substrate site; that span reads TEYE.

This sequence belongs to the class I-like SAM-binding methyltransferase superfamily. TrmB family.

It catalyses the reaction guanosine(46) in tRNA + S-adenosyl-L-methionine = N(7)-methylguanosine(46) in tRNA + S-adenosyl-L-homocysteine. Its pathway is tRNA modification; N(7)-methylguanine-tRNA biosynthesis. Its function is as follows. Catalyzes the formation of N(7)-methylguanine at position 46 (m7G46) in tRNA. The sequence is that of tRNA (guanine-N(7)-)-methyltransferase from Listeria monocytogenes serotype 4a (strain HCC23).